Here is a 581-residue protein sequence, read N- to C-terminus: Kelch-like protein 30 (581 aa).

The 68-residue stretch at 33–100 (ADVTLLVGDQ…VYTGRLTITQ (68 aa)) folds into the BTB domain. One can recognise a BACK domain in the interval 135–237 (CLGICEFGEQ…PRPCVQQLLA (103 aa)). 6 Kelch repeats span residues 280–327 (EEDE…ALNS), 328–378 (DVYV…ALNG), 379–423 (EIYA…GCQG), 425–472 (LYLV…ALNG), 474–514 (LYLI…PLGD), and 515–564 (LLYV…TIFL).

The sequence is that of Kelch-like protein 30 (Klhl30) from Mus musculus (Mouse).